The following is a 690-amino-acid chain: Elongation factor G (690 aa).

The tr-type G domain occupies 8 to 283; it reads SRCRNIGIMA…AVVDFLPSPS (276 aa). Residues 17 to 24, 81 to 85, and 135 to 138 each bind GTP; these read AHIDAGKT, DTPGH, and NKMD.

It belongs to the TRAFAC class translation factor GTPase superfamily. Classic translation factor GTPase family. EF-G/EF-2 subfamily.

It localises to the cytoplasm. In terms of biological role, catalyzes the GTP-dependent ribosomal translocation step during translation elongation. During this step, the ribosome changes from the pre-translocational (PRE) to the post-translocational (POST) state as the newly formed A-site-bound peptidyl-tRNA and P-site-bound deacylated tRNA move to the P and E sites, respectively. Catalyzes the coordinated movement of the two tRNA molecules, the mRNA and conformational changes in the ribosome. The protein is Elongation factor G of Anaplasma marginale (strain St. Maries).